Reading from the N-terminus, the 797-residue chain is Inactive dipeptidyl peptidase 10 (797 aa).

The disordered stretch occupies residues 1-28 (MKQEQQPTPGARATQSQPADQELGSNSP). The Cytoplasmic portion of the chain corresponds to 1-34 (MKQEQQPTPGARATQSQPADQELGSNSPPQRNWK). A helical; Signal-anchor for type II membrane protein membrane pass occupies residues 35–55 (GIAIALLVILVVCSLITMSVI). Residues 56–797 (LLTPDELTNS…VLPQEPEEDE (742 aa)) are Extracellular-facing. 4 N-linked (GlcNAc...) asparagine glycosylation sites follow: Asn64, Asn91, Asn112, and Asn120. Phosphotyrosine is present on residues Tyr139 and Tyr144. Residues Asn258, Asn343, Asn518, and Asn749 are each glycosylated (N-linked (GlcNAc...) asparagine).

This sequence belongs to the peptidase S9B family. DPPIV subfamily. May form oligomers. Interacts with KCND1 and KCND2. N-glycosylation is important for cell surface expression, specially at Asn-258, which is crucial. In terms of tissue distribution, detected in brain cortex (at protein level). Expressed in the brain, predominantly by neurons and not by glia.

It is found in the cell membrane. In terms of biological role, promotes cell surface expression of the potassium channel KCND2. Modulates the activity and gating characteristics of the potassium channel KCND2. Has no dipeptidyl aminopeptidase activity. This chain is Inactive dipeptidyl peptidase 10 (Dpp10), found in Mus musculus (Mouse).